The sequence spans 974 residues: Pentatricopeptide repeat-containing protein At5g61990, mitochondrial (974 aa).

A mitochondrion-targeting transit peptide spans 1–31 (MMGSMLFRKRTLVTRANFLLFRSFSVNVEKL). 24 PPR repeats span residues 96–130 (KLDSFSFLALDLCNFGSFEKALSVVERMIERNWPV), 150–184 (DGVLFGILFDGYIAKGYIEEAVFVFSSSMGLELVP), 185–219 (RLSRCKVLLDALLRWNRLDLFWDVYKGMVERNVVF), 220–250 (DVKTYHMLIIAHCRAGNVQLGKDVLFKTEKE), 257–275 (NVDGALKLKESMICKGLVP), 276–310 (LKYTYDVLIDGLCKIKRLEDAKSLLVEMDSLGVSL), 311–345 (DNHTYSLLIDGLLKGRNADAAKGLVHEMVSHGINI), 346–380 (KPYMYDCCICVMSKEGVMEKAKALFDGMIASGLIP), 381–415 (QAQAYASLIEGYCREKNVRQGYELLVEMKKRNIVI), 416–450 (SPYTYGTVVKGMCSSGDLDGAYNIVKEMIASGCRP), 451–485 (NVVIYTTLIKTFLQNSRFGDAMRVLKEMKEQGIAP), 486–520 (DIFCYNSLIIGLSKAKRMDEARSFLVEMVENGLKP), 521–555 (NAFTYGAFISGYIEASEFASADKYVKEMRECGVLP), 556–590 (NKVLCTGLINEYCKKGKVIEACSAYRSMVDQGILG), 591–625 (DAKTYTVLMNGLFKNDKVDDAEEIFREMRGKGIAP), 626–660 (DVFSYGVLINGFSKLGNMQKASSIFDEMVEEGLTP), 661–695 (NVIIYNMLLGGFCRSGEIEKAKELLDEMSVKGLHP), 696–730 (NAVTYCTIIDGYCKSGDLAEAFRLFDEMKLKGLVP), 731–761 (DSFVYTTLVDGCCRLNDVERAITIFGTNKKG), 765–799 (STAPFNALINWVFKFGKTELKTEVLNRLMDGSFDR), 804–838 (NDVTYNIMIDYLCKEGNLEAAKELFHQMQNANLMP), 839–873 (TVITYTSLLNGYDKMGRRAEMFPVFDEAIAAGIEP), 874–908 (DHIMYSVIINAFLKEGMTTKALVLVDQMFAKNAVD), and 914–948 (SISTCRALLSGFAKVGEMEVAEKVMENMVRLQYIP).

The protein belongs to the PPR family. P subfamily.

It localises to the mitochondrion. This Arabidopsis thaliana (Mouse-ear cress) protein is Pentatricopeptide repeat-containing protein At5g61990, mitochondrial.